A 438-amino-acid polypeptide reads, in one-letter code: Probable chaperone protein ClpB 1 (438 aa).

A coiled-coil region spans residues 1-94 (MNTADTRQRL…NNRKIEARQA (94 aa)). The tract at residues 1–118 (MNTADTRQRL…IADIVSRWTG (118 aa)) is linker. An NBD2 region spans residues 128 to 345 (ERQKLLGIES…RIDEVILFTP (218 aa)). 178–185 (GPTGVGKT) contributes to the ATP binding site. Positions 346–438 (LTRENLREIV…ENDAIVMKKK (93 aa)) are C-terminal.

This sequence belongs to the ClpA/ClpB family. As to quaternary structure, homohexamer. The oligomerization is ATP-dependent.

The protein localises to the cytoplasm. Part of a stress-induced multi-chaperone system, it is involved in the recovery of the cell from heat-induced damage, in cooperation with DnaK, DnaJ and GrpE. Acts before DnaK, in the processing of protein aggregates. Protein binding stimulates the ATPase activity; ATP hydrolysis unfolds the denatured protein aggregates, which probably helps expose new hydrophobic binding sites on the surface of ClpB-bound aggregates, contributing to the solubilization and refolding of denatured protein aggregates by DnaK. This Chlorobaculum tepidum (strain ATCC 49652 / DSM 12025 / NBRC 103806 / TLS) (Chlorobium tepidum) protein is Probable chaperone protein ClpB 1 (clpB1).